The chain runs to 281 residues: Mad-like protein 1 (281 aa).

The segment covering 71 to 80 has biased composition (low complexity); sequence SCASNASTSS. The interval 71 to 105 is disordered; it reads SCASNASTSSQPYCSSPPARKSSKHSRTAHNELEK. Positions 95–108 are basic motif; that stretch reads HSRTAHNELEKTRR. Positions 95–147 constitute a bHLH domain; it reads HSRTAHNELEKTRRANLRGCLETLKMLVPCVSDATRNTTLALLTRARDHIIEL. Residues 109–147 form a helix-loop-helix motif region; it reads ANLRGCLETLKMLVPCVSDATRNTTLALLTRARDHIIEL. Residues 144–185 adopt a coiled-coil conformation; sequence IIELQDSNAAQMKKLNDLRDEQDELVAELAQLQADEEVAQAT. The segment at 189-213 is disordered; that stretch reads CQTLSQSRPESRASSFTSTSSRDSP. Over residues 200–212 the composition is skewed to low complexity; that stretch reads RASSFTSTSSRDS.

In terms of assembly, forms heterodimer with mxl-1 in the presence and absence of DNA. Ubiquitinated. As to expression, expressed in intestinal cells in adults. Expressed in D-type motor neuron cell bodies.

It localises to the nucleus. Functionally, transcriptional regulator which binds to the E box motif 5'-CACGTG-3', when in a heterodimeric complex with mxl-1. Involved in the control of lifespan in response to dietary restriction, the decline in protein homeostasis associated with normal aging, germline signaling and may overlap with the insulin-like signaling pathway. Plays a role in autophagy. Involved in promoting infection by the microsporidian pathogen N.parisii, possibly together with transcription factors pha-4 and zip-10. In response to neuronal injury, mdl-1 is targeted by sdz-33 for ubiquitin-mediated degradation, probably thereby reducing levels of mdl-1-mxl-1 heterodimers, allowing free mxl-1 to form complexes with tdpt-1 and thus inhibiting tdpt-1-dependent sumoylation of ets-4. The protein is Mad-like protein 1 of Caenorhabditis elegans.